Consider the following 1114-residue polypeptide: MMDRSNAAFVLTACFIFSQLICHVAAITRTYYIAAVEKEWDYAPSGYNKIKGVKLEDDSDATVFATKGAHRIGRIYDKVLYREYEDASFTKEKPHPKYLGFLGPILKGEIGDTIVVHFKNNGSRVYSMHPHGVFYSKDSEGALYEDNTKGKFKKDDKVPPGGTHTYSWHLTQSHAPADQEDKCITWIYHSHVVPSKDINTGLLGIMLICRKGALNQGQQSGVDKEFVALFTVLDENESWLLSKNIERCSDPTRVNPDDEDFKESNKMHAINGYFYGNLPGLDMCYGDSVKWHLAGIGNEVDIHTAYFHGQSFTIDGHRKDVASLLPATFVTASMKALNPGKWMLNCLVNDHYNAGMYTLFNVTKCPGKVGVAPSVSGGKKRTYFIAANEVEWNYGPTGVNGMDGQSLIAPGSDSAVFFAQNAQRIGGTYLKAIYEQYTDARFSTKVPKPEHLGFLGPVIRAEVNDIIEVVFKNNARFNFSIQPHGVFFNKSNEGALYEDGTSRAQKADDNVQPGQTFTYRWTVPEEVGPTKSDAACITWVYHSSVDPVKDTYSGLFGPLLTCKKGTLNNDNTRKDTDKEFVLLFTVTDESESWYHEKNKEMKANAILINDDDEDYKESNKMHGINGFLYANLPGLEMCLGDTISWHVIGLGNEVDMHTAYFYGNTFTHQGSVKDTVSLLPGVFGTLTMTPDNAGDWALVCRTNDHYSAGMQAKYKVNTCNRNPELKTSGKTRDYYIAAFEMEWDYAPTGLDALDGKKLDQSEEAKVFTVTSDKRIGRKYVKAVYREFTNDQFNQQKLRTPAEEHLGILGPMLHAEVGDTIKVVFKNNANRNYSVHPHGLYYSKAHEGSDYNDGTSGADKLDNAIQPGKTYTYIWKVPERAGPGKDGPACATWAYYSDVNPIKDTNSGLIGPLIICKKGKLKEGTEERSDVDREFVLMFTVLDENESWYLDENIKKYCKNPGDKETLKADDDFMESNKMHGINGFVFGNLKGLKMYQDEKVDWLLLGIGNEVDMHTVHFHGQSFLRKQVSYHREDVYDLFPGVFATVEMVPDSTGDWLLHCHVNDHMVAGMETLYSVLDKSLKTTPKPITAASSFVTSSIFIYLSFPVLAMLLKA.

The signal sequence occupies residues 1 to 26 (MMDRSNAAFVLTACFIFSQLICHVAA). 6 Plastocyanin-like domains span residues 27 to 210 (ITRT…LICR), 218 to 365 (QQSG…VTKC), 380 to 562 (KRTY…LLTC), 572 to 719 (TRKD…VNTC), 730 to 915 (KTRD…LIIC), and 924 to 1114 (TEER…LLKA). Residues 27–1091 (ITRTYYIAAV…KTTPKPITAA (1065 aa)) lie on the Extracellular side of the membrane. N-linked (GlcNAc...) asparagine glycosylation is present at Asn-121. Residues His-129, His-131, His-189, and His-191 each coordinate Cu cation. Residues Cys-183 and Cys-209 are joined by a disulfide bond. Asn-236 carries N-linked (GlcNAc...) asparagine glycosylation. An intrachain disulfide couples Cys-284 to Cys-365. Cu cation-binding residues include His-303, Cys-346, and His-351. N-linked (GlcNAc...) asparagine glycosylation is found at Asn-361, Asn-478, and Asn-489. 2 cysteine pairs are disulfide-bonded: Cys-536–Cys-562 and Cys-638–Cys-719. Residues His-657, Cys-700, His-705, and Met-710 each coordinate Cu cation. Residue Asn-831 is glycosylated (N-linked (GlcNAc...) asparagine). Cys-889 and Cys-915 are disulfide-bonded. Residue Asn-944 is glycosylated (N-linked (GlcNAc...) asparagine). Cu cation-binding residues include His-1014, His-1017, His-1019, His-1059, Cys-1060, His-1061, His-1065, and Met-1070. A helical transmembrane segment spans residues 1092–1112 (SSFVTSSIFIYLSFPVLAMLL). The Cytoplasmic segment spans residues 1113–1114 (KA).

It belongs to the multicopper oxidase family. Cu cation serves as cofactor. As to expression, component of the acid-insoluble and acid-soluble organic matrix of the aragonitic skeleton (at protein level).

It is found in the membrane. In terms of biological role, may function as a ferroxidase and may be involved in copper transport and homeostasis. The polypeptide is Hephaestin-like protein (Acropora millepora (Staghorn coral)).